The sequence spans 33 residues: Trypsin inhibitor 1 (33 aa).

Disulfide bonds link Cys1/Cys17, Cys8/Cys21, and Cys16/Cys32.

Expressed in leaves and fruit flesh (at protein level).

Functionally, inhibits trypsin (IC(50)=471 nM). This chain is Trypsin inhibitor 1, found in Beta vulgaris subsp. vulgaris (Beet).